A 533-amino-acid polypeptide reads, in one-letter code: Probable lipid II flippase MurJ (533 aa).

14 helical membrane passes run 11–31, 39–61, 96–116, 135–155, 166–186, 196–216, 253–273, 284–304, 330–350, 360–380, 400–420, 422–442, 452–472, and 493–513; these read LANI…FGLL, AFGV…FLFI, LVSG…GIFI, LQIM…FGTL, ISPL…VWQL, WLLG…LQWL, LSSG…SFIP, FVAL…FLPV, LTMF…VQVI, AAAE…FYLG, VSLF…KPFG, VGIV…FIWM, LGGW…ASVA, and ILEV…GVAL.

This sequence belongs to the MurJ/MviN family.

It localises to the cell inner membrane. It functions in the pathway cell wall biogenesis; peptidoglycan biosynthesis. Functionally, involved in peptidoglycan biosynthesis. Transports lipid-linked peptidoglycan precursors from the inner to the outer leaflet of the cytoplasmic membrane. The polypeptide is Probable lipid II flippase MurJ (Synechocystis sp. (strain ATCC 27184 / PCC 6803 / Kazusa)).